The sequence spans 359 residues: 4-hydroxyproline 2-epimerase (359 aa).

The active-site Proton acceptor is Cys-126. Substrate-binding positions include 127-128 (GH), His-248, and Asp-274. Cys-278 functions as the Proton donor in the catalytic mechanism. A substrate-binding site is contributed by 279–280 (GT).

The protein belongs to the proline racemase family.

The catalysed reaction is trans-4-hydroxy-L-proline = cis-4-hydroxy-D-proline. Functionally, catalyzes the epimerization of trans-4-hydroxy-L-proline (t4LHyp) to cis-4-hydroxy-D-proline (c4DHyp). Is likely involved in a degradation pathway that converts t4LHyp to alpha-ketoglutarate. Displays no proline racemase activity. In Planctopirus limnophila (strain ATCC 43296 / DSM 3776 / IFAM 1008 / Mu 290) (Planctomyces limnophilus), this protein is 4-hydroxyproline 2-epimerase.